The sequence spans 543 residues: Ipecac alkaloid beta-glucosidase 3 (543 aa).

A beta-D-glucoside contacts are provided by residues glutamine 36, histidine 140, 185 to 186 (NE), tyrosine 350, glutamate 422, tryptophan 471, and phenylalanine 487. Residue glutamate 186 is the Proton donor of the active site. The Nucleophile role is filled by glutamate 422.

The protein belongs to the glycosyl hydrolase 1 family.

The protein resides in the cytoplasm. It localises to the cytosol. It carries out the reaction deacetylipecoside + H2O = deacetylipecoside aglycone + D-glucose. The enzyme catalyses deacetylisoipecoside + H2O = deacetylisoipecoside aglycone + D-glucose. Its pathway is alkaloid biosynthesis. In terms of biological role, beta-glucosidase catalyzing deglucosylation on N-deacetylisoipecoside and N-deacetylipecoside. In Carapichea ipecacuanha (Ipecac), this protein is Ipecac alkaloid beta-glucosidase 3.